We begin with the raw amino-acid sequence, 174 residues long: CASP-like protein 1 (174 aa).

Positions Met1 to Thr25 are disordered. Topologically, residues Met1–Gly46 are cytoplasmic. The span at Ser8 to Asn18 shows a compositional bias: polar residues. Residues Val47 to Ala67 traverse the membrane as a helical segment. Over Thr68 to Thr96 the chain is Extracellular. Residues Phe97 to Ile117 form a helical membrane-spanning segment. Residues Ala118–Thr119 lie on the Cytoplasmic side of the membrane. A helical transmembrane segment spans residues Ile120 to Phe139. The Extracellular segment spans residues Asn140–Val150. A helical membrane pass occupies residues Val151–Ile171. Over Arg172 to His174 the chain is Cytoplasmic.

Belongs to the Casparian strip membrane proteins (CASP) family. As to quaternary structure, homodimer and heterodimers.

The protein resides in the cell membrane. This is CASP-like protein 1 from Triphysaria pusilla (Dwarf owl's-clover).